Consider the following 451-residue polypeptide: Tubulin alpha chain (451 aa).

A GTP-binding site is contributed by Gln-11. Lys-40 carries the post-translational modification N6-acetyllysine. Residues Glu-71, Gly-144, Thr-145, Thr-179, Asn-206, and Asn-228 each contribute to the GTP site. Glu-71 is a Mg(2+) binding site. Glu-254 is a catalytic residue.

The protein belongs to the tubulin family. Dimer of alpha and beta chains. A typical microtubule is a hollow water-filled tube with an outer diameter of 25 nm and an inner diameter of 15 nM. Alpha-beta heterodimers associate head-to-tail to form protofilaments running lengthwise along the microtubule wall with the beta-tubulin subunit facing the microtubule plus end conferring a structural polarity. Microtubules usually have 13 protofilaments but different protofilament numbers can be found in some organisms and specialized cells. The cofactor is Mg(2+). Post-translationally, undergoes a tyrosination/detyrosination cycle, the cyclic removal and re-addition of a C-terminal tyrosine residue by the enzymes tubulin tyrosine carboxypeptidase (TTCP) and tubulin tyrosine ligase (TTL), respectively. Acetylation of alpha chains at Lys-40 stabilizes microtubules and affects affinity and processivity of microtubule motors. This modification has a role in multiple cellular functions, ranging from cell motility, cell cycle progression or cell differentiation to intracellular trafficking and signaling.

The protein resides in the cytoplasm. The protein localises to the cytoskeleton. The enzyme catalyses GTP + H2O = GDP + phosphate + H(+). Functionally, tubulin is the major constituent of microtubules, a cylinder consisting of laterally associated linear protofilaments composed of alpha- and beta-tubulin heterodimers. Microtubules grow by the addition of GTP-tubulin dimers to the microtubule end, where a stabilizing cap forms. Below the cap, tubulin dimers are in GDP-bound state, owing to GTPase activity of alpha-tubulin. The chain is Tubulin alpha chain (TUBA) from Triticum aestivum (Wheat).